The chain runs to 353 residues: Keratocan (353 aa).

A signal peptide spans 1 to 21 (MMTLKVCPSLLLLFLVHSVWT). Residues 34-72 (EHWSHYTFECPQECFCPPSFPNALYCDNKGLKEIPAIPA) form the LRRNT domain. Intrachain disulfides connect Cys43/Cys49 and Cys47/Cys59. LRR repeat units lie at residues 73–94 (RIWYLYLQNNLIETISEKPFVN), 97–118 (HLRWINLNKNKITNNGIESGVL), 123–143 (RLLYLFLEDNELEEVPAPLPV), 144–165 (GLEQLRLARNKISRIPEGVFSN), 168–188 (NLTMLDLHQNNLLDSALQSDT), 194–214 (SLMQLNIAKNSLKKMPLSIPA), 215–236 (NTLQLFLDNNSIEVIPENYFSA), and 239–259 (KVTFLRLNYNKLSDEGIPPNG). Residue Asn94 is glycosylated (N-linked (GlcNAc...) (keratan sulfate) asparagine). N-linked (GlcNAc...) asparagine glycosylation occurs at Asn168. Asn223 carries an N-linked (GlcNAc...) (keratan sulfate) asparagine glycan. Asn261 carries N-linked (GlcNAc...) (keratan sulfate) asparagine glycosylation. LRR repeat units lie at residues 264 to 283 (SILDLQLSHNQLTKIPPINA) and 284 to 305 (HLEHLHLDHNRIKSVNGTQICP). The N-linked (GlcNAc...) asparagine glycan is linked to Asn299. Cysteines 304 and 344 form a disulfide.

It belongs to the small leucine-rich proteoglycan (SLRP) family. SLRP class II subfamily. In terms of tissue distribution, cornea.

It localises to the secreted. It is found in the extracellular space. Its subcellular location is the extracellular matrix. Its function is as follows. Plays an important role in generating and maintaining a transparent matrix within the corneal stroma. The polypeptide is Keratocan (KERA) (Coturnix japonica (Japanese quail)).